The chain runs to 164 residues: Ion-translocating oxidoreductase complex subunit G (164 aa).

FMN phosphoryl threonine is present on threonine 125.

The protein belongs to the RnfG family. The complex is composed of six subunits: RnfA, RnfB, RnfC, RnfD, RnfE and RnfG. The cofactor is FMN.

Its function is as follows. Part of a membrane-bound complex that couples electron transfer with translocation of ions across the membrane. The protein is Ion-translocating oxidoreductase complex subunit G of Buchnera aphidicola subsp. Acyrthosiphon pisum (strain APS) (Acyrthosiphon pisum symbiotic bacterium).